The primary structure comprises 299 residues: Probable phosphate butyryltransferase (299 aa).

The protein belongs to the phosphate acetyltransferase and butyryltransferase family.

The catalysed reaction is butanoyl-CoA + phosphate = butanoyl phosphate + CoA. Its function is as follows. Catalyzes the conversion of butyryl-CoA through butyryl phosphate to butyrate. This chain is Probable phosphate butyryltransferase (yqiS), found in Bacillus subtilis (strain 168).